Consider the following 599-residue polypeptide: Aspartate--tRNA ligase (599 aa).

L-aspartate is bound at residue E180. Residues 204–207 are aspartate; the sequence is QIFK. R226 contributes to the L-aspartate binding site. ATP contacts are provided by residues 226–228 and Q235; that span reads RDE. Residue H454 coordinates L-aspartate. An ATP-binding site is contributed by E488. R495 serves as a coordination point for L-aspartate. ATP is bound at residue 540–543; it reads GLDR.

Belongs to the class-II aminoacyl-tRNA synthetase family. Type 1 subfamily. As to quaternary structure, homodimer.

Its subcellular location is the cytoplasm. It carries out the reaction tRNA(Asp) + L-aspartate + ATP = L-aspartyl-tRNA(Asp) + AMP + diphosphate. Catalyzes the attachment of L-aspartate to tRNA(Asp) in a two-step reaction: L-aspartate is first activated by ATP to form Asp-AMP and then transferred to the acceptor end of tRNA(Asp). The protein is Aspartate--tRNA ligase of Clostridium botulinum (strain Alaska E43 / Type E3).